A 762-amino-acid polypeptide reads, in one-letter code: FAST kinase domain-containing protein 5, mitochondrial (762 aa).

At Ser95 the chain carries Phosphoserine. At Lys506 the chain carries N6-acetyllysine. One can recognise an RAP domain in the interval 695–755 (LAIQFTNKNQ…RLEKLAYLHE (61 aa)).

The protein belongs to the FAST kinase family. Found in a complex with GRSF1, DDX28, DHX30 and FASTKD2. Associates with the 12S mitochondrial rRNA (12S mt-rRNA). In terms of tissue distribution, expression detected in spleen, testis, colon, heart, smooth muscle, kidney, brain, lung, liver, brown and white adipose tissue.

The protein localises to the mitochondrion matrix. It is found in the mitochondrion nucleoid. Functionally, plays an important role in the processing of non-canonical mitochondrial mRNA precursors. This Mus musculus (Mouse) protein is FAST kinase domain-containing protein 5, mitochondrial (Fastkd5).